The sequence spans 510 residues: Metalloprotease TIKI homolog (510 aa).

A signal peptide spans methionine 1–glycine 30. At serine 31–arginine 489 the chain is on the extracellular side. N-linked (GlcNAc...) asparagine glycans are attached at residues asparagine 37, asparagine 98, asparagine 108, asparagine 141, asparagine 223, asparagine 281, asparagine 322, asparagine 383, and asparagine 417. Positions threonine 435 to serine 471 are enriched in low complexity. The tract at residues threonine 435–aspartate 477 is disordered. Residues tyrosine 490–leucine 510 form a helical membrane-spanning segment.

The protein belongs to the TIKI family. The cofactor is Mn(2+). Co(2+) is required as a cofactor.

The protein localises to the membrane. Metalloprotease. The sequence is that of Metalloprotease TIKI homolog from Amphimedon queenslandica (Sponge).